A 154-amino-acid polypeptide reads, in one-letter code: Homeobox protein engrailed (154 aa).

A DNA-binding region (homeobox) is located at residues 37 to 96 (EKRPRTAFSASQLQRLKQEFQQSNYLTEQRRRSLAKELTLSESQIKIWFQNKRAKIKKAS). The disordered stretch occupies residues 127-154 (KLLNGQNTSGDCSRSDYTSDSDGDSLTH). Residues 129–144 (LNGQNTSGDCSRSDYT) show a composition bias toward polar residues. The segment covering 145 to 154 (SDSDGDSLTH) has biased composition (acidic residues).

The protein belongs to the engrailed homeobox family.

It localises to the nucleus. The sequence is that of Homeobox protein engrailed (EN) from Tripneustes gratilla (Hawaian sea urchin).